The primary structure comprises 314 residues: L-lactate dehydrogenase 2 (314 aa).

NAD(+)-binding positions include Val-16, Asp-37, Lys-42, Tyr-68, and 82–83 (GL). Residues Gln-85, Arg-91, and 123 to 126 (NPVD) each bind substrate. NAD(+) is bound by residues 121-123 (ATN) and Ser-146. Residue 151–154 (DSAR) coordinates substrate. The beta-D-fructose 1,6-bisphosphate site is built by Arg-156 and His-171. His-178 acts as the Proton acceptor in catalysis. Position 223 is a phosphotyrosine (Tyr-223). Substrate is bound at residue Thr-232.

This sequence belongs to the LDH/MDH superfamily. LDH family. Homotetramer.

It localises to the cytoplasm. It catalyses the reaction (S)-lactate + NAD(+) = pyruvate + NADH + H(+). It participates in fermentation; pyruvate fermentation to lactate; (S)-lactate from pyruvate: step 1/1. Its activity is regulated as follows. Allosterically activated by fructose 1,6-bisphosphate (FBP). Catalyzes the conversion of lactate to pyruvate. This is L-lactate dehydrogenase 2 from Bacillus cereus (strain ATCC 14579 / DSM 31 / CCUG 7414 / JCM 2152 / NBRC 15305 / NCIMB 9373 / NCTC 2599 / NRRL B-3711).